Consider the following 284-residue polypeptide: Sulfotransferase 2A6 (284 aa).

A 3'-phosphoadenylyl sulfate-binding site is contributed by 43-48; the sequence is KSGTNW. His98 functions as the Proton acceptor in the catalytic mechanism. 3'-phosphoadenylyl sulfate is bound by residues Arg120, Ser128, Tyr183, 217–222, and 246–248; these read SSFQVM and RNG.

It belongs to the sulfotransferase 1 family. As to quaternary structure, oligomer. As to expression, liver, exhibiting a sex-dependent spatial localization in the lobule of the liver.

The protein resides in the cytoplasm. It localises to the cytosol. The catalysed reaction is an alcohol + 3'-phosphoadenylyl sulfate = an alkyl sulfate + adenosine 3',5'-bisphosphate + H(+). It catalyses the reaction glycolithocholate + 3'-phosphoadenylyl sulfate = sulfoglycolithocholate + adenosine 3',5'-bisphosphate + H(+). It carries out the reaction taurolithocholate + 3'-phosphoadenylyl sulfate = taurolithocholate 3-sulfate + adenosine 3',5'-bisphosphate + H(+). The enzyme catalyses 3beta-hydroxyandrost-5-en-17-one + 3'-phosphoadenylyl sulfate = dehydroepiandrosterone 3-sulfate + adenosine 3',5'-bisphosphate + H(+). The catalysed reaction is 3beta-hydroxy-5-cholenate + 3'-phosphoadenylyl sulfate = 3beta-sulfo-5-cholenate + adenosine 3',5'-bisphosphate + H(+). It catalyses the reaction deoxycholate + 3'-phosphoadenylyl sulfate = 3alpha-sulfodeoxycholate + adenosine 3',5'-bisphosphate + H(+). It carries out the reaction glycodeoxycholate + 3'-phosphoadenylyl sulfate = 3alpha-sulfoglycodeoxycholate + adenosine 3',5'-bisphosphate + H(+). The enzyme catalyses taurodeoxycholate + 3'-phosphoadenylyl sulfate = 3alpha-sulfotaurodeoxycholate + adenosine 3',5'-bisphosphate + H(+). In terms of biological role, sulfotransferase that utilizes 3'-phospho-5'-adenylyl sulfate (PAPS) as sulfonate donor to catalyze the sulfonation of the hydroxyl group of hydroxysteroids and bile acids. Prefered substrates are dehydroepiandrosterone (DHEA, also known as 3beta-hydroxyandrost-5-en-17-one) and 3beta-hydroxy-5-cholenoate, but can also catalyze deoxycholate and its conjugates, and lithocholate conjugates, in vitro. The protein is Sulfotransferase 2A6 of Rattus norvegicus (Rat).